We begin with the raw amino-acid sequence, 845 residues long: RNA-directed RNA polymerase (845 aa).

Residue 248 to 255 (GLPYIGKT) participates in GTP binding. The RdRp catalytic domain occupies 384–588 (MIYADNIYIL…ENERLIASAA (205 aa)). Disordered regions lie at residues 686–706 (PLDS…KKTL) and 799–845 (AGKS…RRNQ). A compositionally biased stretch (basic residues) spans 833–845 (KNAKRREKQRRNQ).

Interacts with VP3 in the cytoplasm. Exists in multiple phosphorylated forms.

It localises to the virion. The catalysed reaction is RNA(n) + a ribonucleoside 5'-triphosphate = RNA(n+1) + diphosphate. RNA-dependent RNA polymerase which is found both free and covalently attached to the genomic RNA. May also contain guanylyl and methyl transferase activities. In Oncorhynchus mykiss (Rainbow trout), this protein is RNA-directed RNA polymerase (VP1).